A 182-amino-acid chain; its full sequence is LPS-assembly lipoprotein LptE (182 aa).

The N-terminal stretch at 1 to 19 (MRHRILTLLLGLAVLVTAG) is a signal peptide. Cys-20 carries N-palmitoyl cysteine lipidation. Cys-20 is lipidated: S-diacylglycerol cysteine.

This sequence belongs to the LptE lipoprotein family. Component of the lipopolysaccharide transport and assembly complex. Interacts with LptD.

Its subcellular location is the cell outer membrane. In terms of biological role, together with LptD, is involved in the assembly of lipopolysaccharide (LPS) at the surface of the outer membrane. Required for the proper assembly of LptD. Binds LPS and may serve as the LPS recognition site at the outer membrane. The chain is LPS-assembly lipoprotein LptE from Photorhabdus laumondii subsp. laumondii (strain DSM 15139 / CIP 105565 / TT01) (Photorhabdus luminescens subsp. laumondii).